Here is a 288-residue protein sequence, read N- to C-terminus: Co-chaperone protein DjlA (288 aa).

Residues 1 to 6 (MEFIGK) lie on the Periplasmic side of the membrane. Residues 7–30 (IIGVFLGWKVGGFFGAIAGLILGS) traverse the membrane as a helical segment. Residues 31 to 288 (IADKKLYELG…DLICKAKGWK (258 aa)) are Cytoplasmic-facing. In terms of domain architecture, J spans 222-288 (DAYKVLGVTE…DLICKAKGWK (67 aa)).

As to quaternary structure, homodimer.

The protein localises to the cell inner membrane. Functionally, regulatory DnaK co-chaperone. Direct interaction between DnaK and DjlA is needed for the induction of the wcaABCDE operon, involved in the synthesis of a colanic acid polysaccharide capsule, possibly through activation of the RcsB/RcsC phosphotransfer signaling pathway. The colanic acid capsule may help the bacterium survive conditions outside the host. The sequence is that of Co-chaperone protein DjlA from Haemophilus influenzae (strain ATCC 51907 / DSM 11121 / KW20 / Rd).